A 445-amino-acid chain; its full sequence is Adenylyltransferase and sulfurtransferase MOCS3 (445 aa).

Residues 49 to 70 are disordered; it reads LPPSAAAEVEPTGSPSSSSSAA. ATP contacts are provided by residues glycine 106, aspartate 127, 134–138, lysine 151, and 170–171; these read DNLHR and NN. Residues cysteine 211 and cysteine 214 each coordinate Zn(2+). Residue cysteine 228 is the Glycyl thioester intermediate; for adenylyltransferase activity of the active site. Positions 286 and 289 each coordinate Zn(2+). One can recognise a Rhodanese domain in the interval 342-443; sequence SGRPHLLVDV…WAKEVDPSFL (102 aa). The Cysteine persulfide intermediate; for sulfurtransferase activity role is filled by cysteine 403.

This sequence in the N-terminal section; belongs to the HesA/MoeB/ThiF family. UBA4 subfamily. Zn(2+) serves as cofactor.

The protein localises to the cytoplasm. It is found in the cytosol. The catalysed reaction is [molybdopterin-synthase sulfur-carrier protein]-C-terminal Gly-Gly + ATP + H(+) = [molybdopterin-synthase sulfur-carrier protein]-C-terminal Gly-Gly-AMP + diphosphate. It carries out the reaction [molybdopterin-synthase sulfur-carrier protein]-C-terminal Gly-Gly-AMP + S-sulfanyl-L-cysteinyl-[cysteine desulfurase] + AH2 = [molybdopterin-synthase sulfur-carrier protein]-C-terminal-Gly-aminoethanethioate + L-cysteinyl-[cysteine desulfurase] + A + AMP + 2 H(+). It functions in the pathway tRNA modification; 5-methoxycarbonylmethyl-2-thiouridine-tRNA biosynthesis. The protein operates within cofactor biosynthesis; molybdopterin biosynthesis. Plays a central role in 2-thiolation of mcm(5)S(2)U at tRNA wobble positions of cytosolic tRNA(Lys), tRNA(Glu) and tRNA(Gln). Also essential during biosynthesis of the molybdenum cofactor. Acts by mediating the C-terminal thiocarboxylation of sulfur carriers URM1 and MOCS2A. Its N-terminus first activates URM1 and MOCS2A as acyl-adenylates (-COAMP), then the persulfide sulfur on the catalytic cysteine is transferred to URM1 and MOCS2A to form thiocarboxylation (-COSH) of their C-terminus. The reaction probably involves hydrogen sulfide that is generated from the persulfide intermediate and that acts as a nucleophile towards URM1 and MOCS2A. Subsequently, a transient disulfide bond is formed. Does not use thiosulfate as sulfur donor; NFS1 probably acting as a sulfur donor for thiocarboxylation reactions. The polypeptide is Adenylyltransferase and sulfurtransferase MOCS3 (Oryza sativa subsp. japonica (Rice)).